The following is a 669-amino-acid chain: Bestrophin-3 (669 aa).

Topologically, residues 1–31 (MTVTYSSKVANATFFGFHRLLLKWRGSIYKL) are cytoplasmic. Alanine 10 lines the Ca(2+) pocket. Residues 32 to 51 (LYREFIVFAVLYTAISLVYR) traverse the membrane as a helical segment. The Extracellular segment spans residues 52 to 60 (LLLTGAQKR). A helical membrane pass occupies residues 61–82 (YFEKLSIYCDRYAEQIPVTFVL). Residues 83-237 (GFYVTLVVNR…DWVGIPLVYT (155 aa)) are Cytoplasmic-facing. The helical transmembrane segment at 238-255 (QVVTLAVYTFFFACLIGR) threads the bilayer. Over 256–274 (QFLDPTKGYVGHDLDLYVP) the chain is Extracellular. Residues 275 to 288 (IFTLLQFFFYAGWL) form a helical membrane-spanning segment. Topologically, residues 289–669 (KVAEQLINPF…GTPQRPRTWF (381 aa)) are cytoplasmic. Residues glutamine 293, asparagine 296, aspartate 301, and aspartate 304 each coordinate Ca(2+). 4 disordered regions span residues 399–496 (LSTH…TKMP), 533–560 (QPSGTEQQVEPSGTPPGDPNPQTTSAST), 591–627 (TSLGNLGPDPVSPRDALLLPDTETPSETNGIHPGAGS), and 646–669 (ILEFNNEHTGESPKGTPQRPRTWF). The span at 440–451 (NPHRGSPTRKQS) shows a compositional bias: basic residues. Residues 475 to 492 (RTSTLQSLSPQSSVRSSP) show a composition bias toward low complexity. A compositionally biased stretch (polar residues) spans 533 to 543 (QPSGTEQQVEP). A compositionally biased stretch (basic and acidic residues) spans 646–656 (ILEFNNEHTGE).

It belongs to the anion channel-forming bestrophin (TC 1.A.46) family. Calcium-sensitive chloride channel subfamily. Expressed in heart. In terms of tissue distribution, expressed in brain, retina/retinal pigment epithelium (RPE) and skeletal muscle. Expressed in acinar cells of parotid glands. Expressed in lung, kidney and testis.

Its subcellular location is the cell membrane. The catalysed reaction is chloride(in) = chloride(out). In terms of biological role, ligand-gated anion channel that allows the movement of chloride monoatomic anions across cell membranes when activated by calcium (Ca2+). Its function is as follows. Does not function as calcium-gated chloride channel. This is Bestrophin-3 (Best3) from Mus musculus (Mouse).